We begin with the raw amino-acid sequence, 810 residues long: Plasminogen (810 aa).

An N-terminal signal peptide occupies residues 1–19; that stretch reads MEHKEVVLLLLLFLKSGQG. Residues 20–98 form the PAN domain; it reads EPLDDYVNTQ…RDVVLFEKKV (79 aa). 12 disulfide bridges follow: Cys-49–Cys-73, Cys-53–Cys-61, Cys-103–Cys-181, Cys-124–Cys-164, Cys-152–Cys-176, Cys-185–Cys-262, Cys-188–Cys-316, Cys-206–Cys-245, Cys-234–Cys-257, Cys-275–Cys-352, Cys-296–Cys-335, and Cys-324–Cys-347. 3 Kringle domains span residues 103–181, 184–262, and 275–352; these read CKTG…IPEC, ACMH…IPRC, and CLKG…IPSC. Residues 126–145 form a disordered region; sequence KWSSTSPHRPRFSPATHPSE. L-lysine contacts are provided by Arg-136, Asp-158, and Arg-172. A glycan (O-linked (GalNAc...) threonine) is linked at Thr-365. Cystine bridges form between Cys-377-Cys-454, Cys-398-Cys-437, Cys-426-Cys-449, Cys-481-Cys-560, Cys-502-Cys-543, Cys-531-Cys-555, Cys-567-Cys-685, Cys-577-Cys-585, and Cys-607-Cys-623. 2 Kringle domains span residues 377 to 454 and 481 to 560; these read CYHG…LKKC and CMFG…VPQC. L-lysine-binding residues include Asp-432 and Arg-445. In terms of domain architecture, Peptidase S1 spans 581 to 808; the sequence is VVGGCVANAH…FVTWIEGVMR (228 aa). Ser-597 bears the Phosphoserine mark. Active-site charge relay system residues include His-622 and Asp-665. Ser-688 is modified (phosphoserine). 3 cysteine pairs are disulfide-bonded: Cys-699–Cys-766, Cys-729–Cys-745, and Cys-756–Cys-784. Ser-760 (charge relay system) is an active-site residue.

It belongs to the peptidase S1 family. Plasminogen subfamily. Interacts with CSPG4 and AMOT. Interacts (via the Kringle domains) with HRG; the interaction tethers PLG to the cell surface and enhances its activation. Interacts (via Kringle 4 domain) with ADA; the interaction stimulates PLG activation when in complex with DPP4. Angiostatin: Interacts with ATP5F1A; the interaction inhibits most of the angiogenic effects of angiostatin. In terms of processing, in the presence of the inhibitor, the activation involves only cleavage after Arg-580, yielding two chains held together by two disulfide bonds. In the absence of the inhibitor, the activation involves additionally the removal of the activation peptide.

The protein resides in the secreted. It catalyses the reaction Preferential cleavage: Lys-|-Xaa &gt; Arg-|-Xaa, higher selectivity than trypsin. Converts fibrin into soluble products.. With respect to regulation, converted into plasmin by plasminogen activators, both plasminogen and its activator being bound to fibrin. Activated with catalytic amounts of streptokinase. In terms of biological role, plasmin dissolves the fibrin of blood clots and acts as a proteolytic factor in a variety of other processes including embryonic development, tissue remodeling, tumor invasion, and inflammation. In ovulation, weakens the walls of the Graafian follicle. It activates the urokinase-type plasminogen activator, collagenases and several complement zymogens, such as C1, C4 and C5. Cleavage of fibronectin and laminin leads to cell detachment and apoptosis. Also cleaves fibrin, thrombospondin and von Willebrand factor. Its role in tissue remodeling and tumor invasion may be modulated by CSPG4. Binds to cells. In Pongo abelii (Sumatran orangutan), this protein is Plasminogen (PLG).